The primary structure comprises 212 residues: Ribonuclease HII (212 aa).

Residues Gly-18 to Arg-212 enclose the RNase H type-2 domain. Residues Asp-24, Glu-25, and Asp-118 each coordinate a divalent metal cation.

It belongs to the RNase HII family. It depends on Mn(2+) as a cofactor. Mg(2+) serves as cofactor.

The protein resides in the cytoplasm. The enzyme catalyses Endonucleolytic cleavage to 5'-phosphomonoester.. Its function is as follows. Endonuclease that specifically degrades the RNA of RNA-DNA hybrids. In Erythrobacter litoralis (strain HTCC2594), this protein is Ribonuclease HII.